We begin with the raw amino-acid sequence, 1221 residues long: Fibulin-2 (1221 aa).

Positions 1–26 are cleaved as a signal peptide; it reads MLLQESAGVWLALALVTALTPSPSMA. The interval 27–176 is subdomain NA (Cys-rich); that stretch reads VPWQDCTGAE…ELICYQLPGC (150 aa). A n region spans residues 27–434; that stretch reads VPWQDCTGAE…DGSTKDLIET (408 aa). Positions 177 to 434 are subdomain NB (Cys-free); it reads HGNFSDAEEG…DGSTKDLIET (258 aa). A glycan (N-linked (GlcNAc...) asparagine) is linked at Asn-179. Disordered regions lie at residues 248 to 329 and 341 to 399; these read PTAA…LIPD and GAAP…PQHP. Positions 270 to 283 are enriched in acidic residues; that stretch reads DTEEDEEEEEEETL. A compositionally biased stretch (basic and acidic residues) spans 312 to 322; the sequence is QEKEAEAKAGP. Positions 421–423 match the Cell attachment site motif; that stretch reads RGD. Disulfide bonds link Cys-435-Cys-462, Cys-436-Cys-469, Cys-449-Cys-470, Cys-479-Cys-508, Cys-492-Cys-509, Cys-511-Cys-535, Cys-512-Cys-542, Cys-525-Cys-543, Cys-598-Cys-610, Cys-606-Cys-619, and Cys-621-Cys-634. Anaphylatoxin-like domains lie at 435-477, 478-510, and 511-543; these read CCAA…LKEK, SCVA…QCCD, and CCGL…LSCC. Asn-497 carries N-linked (GlcNAc...) asparagine glycosylation. One can recognise an EGF-like 1; calcium-binding domain in the interval 594 to 635; it reads DQDECLMLPGELCQHLCINTVGSYRCACFPGFELQGDGRTCR. A disordered region spans residues 633-661; the sequence is TCRPDRGAPQLDTARESAPRSESAQVSPN. The segment covering 652 to 661 has biased composition (polar residues); the sequence is RSESAQVSPN. Positions 669–708 constitute an EGF-like 2 domain; that stretch reads QPNTCKDNGPCRQVCRVVGDTAMCSCFPGYAIMADGVSCE. 5 disulfide bridges follow: Cys-673/Cys-683, Cys-679/Cys-692, Cys-694/Cys-707, Cys-713/Cys-726, and Cys-720/Cys-735. One can recognise an EGF-like 3; calcium-binding domain in the interval 709-755; that stretch reads DQDECLMGTHDCSWKQFCVNTLGSFYCVNHTVLCAEGYILNAHRKCV. Asn-737 carries an N-linked (GlcNAc...) asparagine glycan. An intrachain disulfide couples Cys-742 to Cys-754. The EGF-like 4; calcium-binding domain occupies 756–800; sequence DINECVTDLHTCTRAEHCVNTPGSFQCYKALTCEPGYVLTDGECT. Residues 801-846 enclose the EGF-like 5; calcium-binding domain; it reads DVDECVTGTHNCQAGFSCQNTKGSFYCQARQRCMDGFLQDPEGNCV. Disulfide bonds link Cys-805–Cys-818, Cys-812–Cys-827, and Cys-833–Cys-845. The 48-residue stretch at 847 to 894 folds into the EGF-like 6; calcium-binding domain; sequence DINECTSLLEPCRSGFSCINTVGSYTCQRNPLVCGRGYHANEEGSECV. Residues 895–937 enclose the EGF-like 7; calcium-binding domain; it reads DVNECETGVHRCGEGQLCYNLPGSYRCDCKPGFQRDAFGRTCI. 15 disulfides stabilise this stretch: Cys-899–Cys-912, Cys-906–Cys-921, Cys-923–Cys-936, Cys-942–Cys-954, Cys-950–Cys-963, Cys-965–Cys-978, Cys-984–Cys-993, Cys-989–Cys-1002, Cys-1004–Cys-1017, Cys-1023–Cys-1035, Cys-1031–Cys-1044, Cys-1046–Cys-1060, Cys-1066–Cys-1079, Cys-1073–Cys-1088, and Cys-1093–Cys-1105. The 42-residue stretch at 938–979 folds into the EGF-like 8; calcium-binding domain; the sequence is DVNECWVSPGRLCQHTCENTPGSYRCSCAAGFLLAADGKHCE. An EGF-like 9; calcium-binding domain is found at 980–1018; it reads DVNECETRRCSQECANIYGSYQCYCRQGYQLAEDGHTCT. The region spanning 1019 to 1061 is the EGF-like 10; calcium-binding domain; sequence DIDECAQGAGILCTFRCVNVPGSYQCACPEQGYTMMANGRSCK. The region spanning 1062 to 1106 is the EGF-like 11; calcium-binding domain; it reads DLDECALGTHNCSEAETCHNIQGSFRCLRFDCPPNYVRVSETKCE. N-linked (GlcNAc...) asparagine glycosylation occurs at Asn-1072. The domain III stretch occupies residues 1111 to 1221; that stretch reads QDITECQTSP…MYIFFTTFAP (111 aa).

This sequence belongs to the fibulin family. Homotrimer; disulfide-linked. Interacts with LAMA2. Interacts with FBN1 (via N-terminal domain). Forms a ternary complex with ELN and FBN1. As to expression, component of both basement membranes and other connective tissues.

Its subcellular location is the secreted. The protein resides in the extracellular space. The protein localises to the extracellular matrix. In terms of biological role, its binding to fibronectin and some other ligands is calcium dependent. May act as an adapter that mediates the interaction between FBN1 and ELN. The polypeptide is Fibulin-2 (Fbln2) (Mus musculus (Mouse)).